A 741-amino-acid chain; its full sequence is Cysteine--tRNA ligase, cytoplasmic (741 aa).

Residue cysteine 46 coordinates Zn(2+). The 'HIGH' region signature appears at 48–58 (PTVYDASHMGH). The residue at position 297 (serine 297) is a Phosphoserine. Positions 340, 365, and 369 each coordinate Zn(2+). Residues 398–402 (KMSKS) carry the 'KMSKS' region motif. Lysine 401 serves as a coordination point for ATP. The interval 697–718 (FDENGLPTHDKEGKEVSKGQIK) is disordered. Over residues 704–713 (THDKEGKEVS) the composition is skewed to basic and acidic residues.

It belongs to the class-I aminoacyl-tRNA synthetase family. Requires Zn(2+) as cofactor.

It is found in the cytoplasm. It catalyses the reaction tRNA(Cys) + L-cysteine + ATP = L-cysteinyl-tRNA(Cys) + AMP + diphosphate. The protein is Cysteine--tRNA ligase, cytoplasmic of Drosophila melanogaster (Fruit fly).